The following is a 532-amino-acid chain: 2,3-bisphosphoglycerate-independent phosphoglycerate mutase (532 aa).

Residues Asp-15 and Ser-65 each coordinate Mn(2+). Ser-65 acts as the Phosphoserine intermediate in catalysis. Substrate contacts are provided by residues His-126, 156 to 157, Arg-188, Arg-194, 258 to 261, and Lys-331; these read RD and RPDR. The Mn(2+) site is built by Asp-398, His-402, Asp-439, His-440, and His-457.

Belongs to the BPG-independent phosphoglycerate mutase family. Monomer. It depends on Mn(2+) as a cofactor.

The enzyme catalyses (2R)-2-phosphoglycerate = (2R)-3-phosphoglycerate. The protein operates within carbohydrate degradation; glycolysis; pyruvate from D-glyceraldehyde 3-phosphate: step 3/5. Its function is as follows. Catalyzes the interconversion of 2-phosphoglycerate and 3-phosphoglycerate. The protein is 2,3-bisphosphoglycerate-independent phosphoglycerate mutase of Gloeothece citriformis (strain PCC 7424) (Cyanothece sp. (strain PCC 7424)).